A 626-amino-acid polypeptide reads, in one-letter code: Nuclear RNA export factor 1 (626 aa).

Residues 1–16 show a composition bias toward basic and acidic residues; that stretch reads MADEGKSYSEHDDERV. The disordered stretch occupies residues 1–85; sequence MADEGKSYSE…TTRPNRRGDA (85 aa). An N-acetylalanine modification is found at alanine 2. Residues 2-60 are minor non-specific RNA-binding; it reads ADEGKSYSEHDDERVNFPQRKKKGRGPFRWKYGEGNRRSGRGGSGIRSSRLEEDDGDVA. Residues 2 to 118 form an RNA-binding (RBD) region; that stretch reads ADEGKSYSEH…GTSQDGTSKN (117 aa). Positions 2 to 198 are interaction with ALYREF/THOC4 and LUZP4; sequence ADEGKSYSEH…IIINPSAPPH (197 aa). Position 9 is a phosphoserine (serine 9). Residues 20–29 are compositionally biased toward basic residues; sequence QRKKKGRGPF. Arginine 42 is modified (asymmetric dimethylarginine; alternate). Residue arginine 42 is modified to Omega-N-methylarginine; alternate. The major non-specific RNA-binding stretch occupies residues 61–118; sequence MSDAQDGPRVRYNPYTTRPNRRGDAWHDRDRIHVTVRRDRAPPERGGAGTSQDGTSKN. The interval 61–118 is RNA binding; it reads MSDAQDGPRVRYNPYTTRPNRRGDAWHDRDRIHVTVRRDRAPPERGGAGTSQDGTSKN. The short motif at 67-100 is the Nuclear localization signal element; the sequence is GPRVRYNPYTTRPNRRGDAWHDRDRIHVTVRRDR. The Nuclear export signal motif lies at 83-110; that stretch reads GDAWHDRDRIHVTVRRDRAPPERGGAGT. The 80-residue stretch at 119–198 folds into the RRM domain; sequence WFKITIPYGR…IIINPSAPPH (80 aa). Tyrosine 126 is subject to 3'-nitrotyrosine. LRR repeat units lie at residues 266–291, 292–315, 316–350, and 351–378; these read ELLSLNLSHNRLYRLDDMSSIVQKVP, NLKILNLSGNELKSERELDKIKGL, KLEELWLDGNSLCDTFRDQSTYIRSVVACVSAIRE, and RFPKLLRLDGHELPPPIAFDVEAPTTLP. The 151-residue stretch at 393–543 folds into the NTF2 domain; sequence LVLHFLQQYY…LCIVNDELFV (151 aa). The region spanning 572-626 is the TAP-C domain; that stretch reads PEQQEMLQAFSTQSGMNLEWSQKCLQDNNWDYTRSAQAFTHLKAKGEIPEVAFMK.

It belongs to the NXF family. In terms of assembly, heterodimer (via NTF2 domain) with NXT1. The formation of NXF1-NXT1 heterodimers is required for the NXF1-mediated nuclear mRNA export. Forms a complex with RANBP2/NUP358, NXT1 and RANGAP1. Associates with the exon junction complex (EJC) and with the transcription/export (TREX) complex. Found in a mRNA complex with UPF3A and UPF3B. Found in a post-splicing complex with RBM8A, UPF1, UPF2, UPF3A, UPF3B and RNPS1. Interacts (via N-terminus) with DHX9 (via N-terminus); this interaction is direct and negatively regulates NXF1-mediated nuclear export of constitutive transport element (CTE)-containing cellular mRNAs. Interacts with ALYREF/THOC4. Interacts with FYTTD1/UIF. Interacts with EIF4A3. Interacts with NUPL2. Interacts with THOC5. Interacts with CHTOP. Interacts with FRG1 (via N-terminus). Interacts with LUZP4. Interacts with FMR1; the interaction occurs in a mRNA-dependent and polyribosomes-independent manner in the nucleus. Interacts with CPSF6 (via N-terminus); this interaction is direct. Interacts with RBM15. Interacts with RBM15B. Interacts with MCM3AP; this interaction is not mediated by RNA.

It localises to the nucleus. Its subcellular location is the nucleoplasm. The protein localises to the nucleus speckle. It is found in the cytoplasm. Involved in the nuclear export of mRNA species bearing retroviral constitutive transport elements (CTE) and in the export of mRNA from the nucleus to the cytoplasm (TAP/NFX1 pathway). The NXF1-NXT1 heterodimer is involved in the export of HSP70 mRNA in conjunction with ALYREF/THOC4 and THOC5 components of the TREX complex. ALYREF/THOC4-bound mRNA is thought to be transferred to the NXF1-NXT1 heterodimer for export. Also involved in nuclear export of m6A-containing mRNAs: interaction between SRSF3 and YTHDC1 facilitates m6A-containing mRNA-binding to both SRSF3 and NXF1, promoting mRNA nuclear export. This is Nuclear RNA export factor 1 (NXF1) from Pongo abelii (Sumatran orangutan).